Consider the following 363-residue polypeptide: Mitogen-activated protein kinase 4 (363 aa).

The Protein kinase domain maps to 30–318; the sequence is YDLVKVVGFG…AKQVMEHPYF (289 aa). ATP contacts are provided by residues 36–44 and Lys59; that span reads VGFGACGTV. Asp156 functions as the Proton acceptor in the catalytic mechanism. Phosphoserine occurs at positions 186 and 187. Thr190 carries the phosphothreonine; by MKK5 modification. The TQY signature appears at 190–192; that stretch reads TQY. Tyr192 is subject to Phosphotyrosine; by MKK5.

Belongs to the protein kinase superfamily. CMGC Ser/Thr protein kinase family. MAP kinase subfamily. Mg(2+) serves as cofactor. Dually phosphorylated on Thr-190 and Tyr-192, which activates the enzyme.

It carries out the reaction L-seryl-[protein] + ATP = O-phospho-L-seryl-[protein] + ADP + H(+). It catalyses the reaction L-threonyl-[protein] + ATP = O-phospho-L-threonyl-[protein] + ADP + H(+). Functionally, essential for the two main proliferating life stages, the promastigotes and amastigotes, of the parasite. This chain is Mitogen-activated protein kinase 4, found in Leishmania mexicana.